The primary structure comprises 423 residues: Adenylosuccinate synthetase (423 aa).

Catalysis depends on Asp12, which acts as the Proton acceptor. Mg(2+) is bound by residues Asp12 and Gly39. Residues 37 to 40, Thr129, Arg143, Asn221, Thr236, and Arg300 contribute to the IMP site; that span reads NAGH. A GTP-binding site is contributed by 39–41; that stretch reads GHS. His40 (proton donor) is an active-site residue. 296–302 is a binding site for substrate; that stretch reads VSTGRKR. Residues Arg302, 328 to 330, and 412 to 414 each bind GTP; these read KLD and GTG.

This sequence belongs to the adenylosuccinate synthetase family. As to quaternary structure, homodimer. The cofactor is Mg(2+).

The protein resides in the cytoplasm. The catalysed reaction is IMP + L-aspartate + GTP = N(6)-(1,2-dicarboxyethyl)-AMP + GDP + phosphate + 2 H(+). It functions in the pathway purine metabolism; AMP biosynthesis via de novo pathway; AMP from IMP: step 1/2. Functionally, plays an important role in the de novo pathway and in the salvage pathway of purine nucleotide biosynthesis. Catalyzes the first committed step in the biosynthesis of AMP from IMP. This is Adenylosuccinate synthetase from Pyricularia oryzae (strain 70-15 / ATCC MYA-4617 / FGSC 8958) (Rice blast fungus).